Reading from the N-terminus, the 469-residue chain is Aspartyl/glutamyl-tRNA(Asn/Gln) amidotransferase subunit B (469 aa).

Belongs to the GatB/GatE family. GatB subfamily. Heterotrimer of A, B and C subunits.

It catalyses the reaction L-glutamyl-tRNA(Gln) + L-glutamine + ATP + H2O = L-glutaminyl-tRNA(Gln) + L-glutamate + ADP + phosphate + H(+). The enzyme catalyses L-aspartyl-tRNA(Asn) + L-glutamine + ATP + H2O = L-asparaginyl-tRNA(Asn) + L-glutamate + ADP + phosphate + 2 H(+). Allows the formation of correctly charged Asn-tRNA(Asn) or Gln-tRNA(Gln) through the transamidation of misacylated Asp-tRNA(Asn) or Glu-tRNA(Gln) in organisms which lack either or both of asparaginyl-tRNA or glutaminyl-tRNA synthetases. The reaction takes place in the presence of glutamine and ATP through an activated phospho-Asp-tRNA(Asn) or phospho-Glu-tRNA(Gln). The protein is Aspartyl/glutamyl-tRNA(Asn/Gln) amidotransferase subunit B of Methanococcus aeolicus (strain ATCC BAA-1280 / DSM 17508 / OCM 812 / Nankai-3).